The primary structure comprises 444 residues: Chromosome partition protein MukF (444 aa).

A leucine-zipper region spans residues 212-240 (LDETSGNLRELQDTLNAAGDKLQAQLLRI).

This sequence belongs to the MukF family. Interacts, and probably forms a ternary complex, with MukE and MukB via its C-terminal region. The complex formation is stimulated by calcium or magnesium. It is required for an interaction between MukE and MukB.

The protein resides in the cytoplasm. Its subcellular location is the nucleoid. In terms of biological role, involved in chromosome condensation, segregation and cell cycle progression. May participate in facilitating chromosome segregation by condensation DNA from both sides of a centrally located replisome during cell division. Not required for mini-F plasmid partitioning. Probably acts via its interaction with MukB and MukE. Overexpression results in anucleate cells. It has a calcium binding activity. This chain is Chromosome partition protein MukF, found in Haemophilus influenzae (strain PittEE).